The sequence spans 156 residues: Small ribosomal subunit protein uS7 (156 aa).

The protein belongs to the universal ribosomal protein uS7 family. Part of the 30S ribosomal subunit. Contacts proteins S9 and S11.

Its function is as follows. One of the primary rRNA binding proteins, it binds directly to 16S rRNA where it nucleates assembly of the head domain of the 30S subunit. Is located at the subunit interface close to the decoding center, probably blocks exit of the E-site tRNA. This chain is Small ribosomal subunit protein uS7, found in Pelotomaculum thermopropionicum (strain DSM 13744 / JCM 10971 / SI).